Consider the following 290-residue polypeptide: Transposon Ty3-G Gag polyprotein (290 aa).

Position 2 is an N-acetylserine (S2). A CCHC-type zinc finger spans residues 265 to 282; it reads RLCFYCKKEGHRLNECRA.

It localises to the cytoplasm. In terms of biological role, capsid protein (CA) is the structural component of the virus-like particle (VLP), forming the shell that encapsulates the retrotransposons dimeric RNA genome. Functionally, nucleocapsid protein p9 (NC) forms the nucleocore that coats the retro-elements dimeric RNA. Binds these RNAs through its zinc fingers. Promotes primer tRNA(i)-Met annealing to the multipartite primer-binding site (PBS), dimerization of Ty3 RNA and initiation of reverse transcription. The polypeptide is Transposon Ty3-G Gag polyprotein (TY3A-G) (Saccharomyces cerevisiae (strain ATCC 204508 / S288c) (Baker's yeast)).